Reading from the N-terminus, the 176-residue chain is Peptide methionine sulfoxide reductase MsrA (176 aa).

Residue C10 is part of the active site.

It belongs to the MsrA Met sulfoxide reductase family.

The catalysed reaction is L-methionyl-[protein] + [thioredoxin]-disulfide + H2O = L-methionyl-(S)-S-oxide-[protein] + [thioredoxin]-dithiol. It carries out the reaction [thioredoxin]-disulfide + L-methionine + H2O = L-methionine (S)-S-oxide + [thioredoxin]-dithiol. In terms of biological role, has an important function as a repair enzyme for proteins that have been inactivated by oxidation. Catalyzes the reversible oxidation-reduction of methionine sulfoxide in proteins to methionine. The chain is Peptide methionine sulfoxide reductase MsrA from Chromobacterium violaceum (strain ATCC 12472 / DSM 30191 / JCM 1249 / CCUG 213 / NBRC 12614 / NCIMB 9131 / NCTC 9757 / MK).